The sequence spans 764 residues: Serine/threonine-protein kinase MPS1 (764 aa).

Disordered stretches follow at residues 66–95 (EEMD…SSHS), 197–216 (ELPL…RNTD), and 258–316 (QAAL…KSSI). Over residues 85–95 (TSGHTSTSSHS) the composition is skewed to low complexity. The span at 201–216 (EDSHQTNFKETKRNTD) shows a compositional bias: basic and acidic residues. Composition is skewed to low complexity over residues 272–292 (KSRS…KDNS) and 306–315 (STGSSSSKSS). Residues 440 to 720 (YEKIELLGRG…LSSTFLQPFM (281 aa)) enclose the Protein kinase domain. ATP-binding positions include 446-454 (LGRGGSSRV) and Lys-468. The Proton acceptor role is filled by Asp-563.

The protein belongs to the protein kinase superfamily. Ser/Thr protein kinase family. Post-translationally, autophosphorylated.

The enzyme catalyses L-seryl-[protein] + ATP = O-phospho-L-seryl-[protein] + ADP + H(+). It catalyses the reaction L-threonyl-[protein] + ATP = O-phospho-L-threonyl-[protein] + ADP + H(+). The catalysed reaction is L-tyrosyl-[protein] + ATP = O-phospho-L-tyrosyl-[protein] + ADP + H(+). Involved in mitotic spindle assembly checkpoint signaling, a process that delays anaphase until chromosomes are bioriented on the spindle, and in the repair of incorrect mitotic kinetochore-spindle microtubule attachments. Phosphorylates SPC105 on MELT motifs; phosphorylation is required for recruitment of the BUB1-BUB3 complex to kinetochores. Phosphorylates CNN1, which contributes to the enrichment of CNN1 on anaphase kinetochores. Implicated in spindle pole body (SPD) duplication. Phosphorylates the SPC29 and SPC110 spindle pole body components. This chain is Serine/threonine-protein kinase MPS1 (MPS1), found in Saccharomyces cerevisiae (strain ATCC 204508 / S288c) (Baker's yeast).